The primary structure comprises 1134 residues: Protocadherin 18 (1134 aa).

The first 27 residues, 1–27 (MHQMNTKMHFRFALALLMAFFSHDVLA), serve as a signal peptide directing secretion. 6 consecutive Cadherin domains span residues 28-137 (KNLK…SPQF), 138-246 (SRPV…SPAF), 247-354 (EQPS…KPEI), 361-465 (PGKE…PPRF), 466-576 (QRSR…VPVV), and 582-688 (HNNT…STAM). Residues 28-699 (KNLKYRIYEE…SVSRASLDVS (672 aa)) lie on the Extracellular side of the membrane. Residue N103 is glycosylated (N-linked (GlcNAc...) asparagine). The N-linked (GlcNAc...) asparagine glycan is linked to N269. N559 carries N-linked (GlcNAc...) asparagine glycosylation. The chain crosses the membrane as a helical span at residues 700–720 (MIIIISLGAICAVLLVIMVLF). Over 721 to 1134 (ATRCNREKKD…NKLLQDVRQS (414 aa)) the chain is Cytoplasmic. 4 disordered regions span residues 769–800 (LPIR…NSHQ), 868–888 (SLKD…DLGR), 941–1004 (DYRS…SSLL), and 1022–1083 (FSEC…PSSK). The span at 791–800 (GSRQSHNSHQ) shows a compositional bias: polar residues. Basic and acidic residues predominate over residues 868 to 877 (SLKDSGRGDS). Residues 892 to 1134 (IDRLLGEGFS…NKLLQDVRQS (243 aa)) are interaction with DAB1. Residues 1027–1038 (EGDRSNSLERRK) are compositionally biased toward basic and acidic residues. Residues 1059–1082 (THFQNPTSSSGTPLGTHSSVQPSS) are compositionally biased toward polar residues.

In terms of assembly, interacts with DAB1. As to expression, predominantly expressed in kidney and lung.

The protein localises to the cell membrane. Potential calcium-dependent cell-adhesion protein. This is Protocadherin 18 (Pcdh18) from Mus musculus (Mouse).